The sequence spans 459 residues: Alpha,alpha-trehalose-phosphate synthase [UDP-forming] (459 aa).

Y86 and D140 together coordinate D-glucose 6-phosphate. The UDP site is built by R262 and K267. UDP-alpha-D-glucose contacts are provided by R262 and K267. R300 contacts D-glucose 6-phosphate. Residue 361–369 (DGMNLVALE) coordinates UDP-alpha-D-glucose. 365–369 (LVALE) contacts UDP.

Belongs to the glycosyltransferase 20 family. In terms of assembly, component of the trehalose synthase complex.

Its subcellular location is the cytoplasm. The catalysed reaction is D-glucose 6-phosphate + UDP-alpha-D-glucose = alpha,alpha-trehalose 6-phosphate + UDP + H(+). Its function is as follows. Synthase catalytic subunit of the trehalose synthase complex that catalyzes the production of trehalose from glucose-6-phosphate and UDP-alpha-D-glucose in a two step process. Can function independently of the complex. In Encephalitozoon cuniculi (strain GB-M1) (Microsporidian parasite), this protein is Alpha,alpha-trehalose-phosphate synthase [UDP-forming] (TPS1).